A 36-amino-acid polypeptide reads, in one-letter code: Turgencin-A (36 aa).

Cystine bridges form between C8/C33, C12/C29, and C17/C26. M10 bears the Methionine sulfoxide mark. V36 carries the valine amide modification.

The protein resides in the secreted. In terms of biological role, has antimicrobial activity against Gram-positive bacteria (C.glutamicum ATCC 13032 (MIC=0.4 uM), B.subtilis ATCC 23857 (MIC=0.4 uM) and S.aureus ATCC 9144 (MIC=6.3 uM)) and Gram-negative bacteria (E.coli ATCC 25922 (MIC=0.8 uM) and P.aeruginosa ATCC 27853 (MIC=1.6 uM)). This Synoicum turgens (Colonial ascidian) protein is Turgencin-A.